The sequence spans 275 residues: Phosphonoacetaldehyde hydrolase (275 aa).

The active-site Nucleophile is the Asp15. Asp15 and Ala17 together coordinate Mg(2+). Lys56 serves as the catalytic Schiff-base intermediate with substrate. Asp189 contributes to the Mg(2+) binding site.

The protein belongs to the HAD-like hydrolase superfamily. PhnX family. In terms of assembly, homodimer. It depends on Mg(2+) as a cofactor.

It carries out the reaction phosphonoacetaldehyde + H2O = acetaldehyde + phosphate + H(+). Functionally, involved in phosphonate degradation. The sequence is that of Phosphonoacetaldehyde hydrolase from Pseudomonas fluorescens (strain SBW25).